The following is a 321-amino-acid chain: Glycerol-3-phosphate dehydrogenase [NAD(P)+] (321 aa).

NADPH contacts are provided by S10, F11, R31, R32, and K104. 2 residues coordinate sn-glycerol 3-phosphate: K104 and G132. A136 is an NADPH binding site. Residues K186, D238, S248, R249, and N250 each coordinate sn-glycerol 3-phosphate. The Proton acceptor role is filled by K186. An NADPH-binding site is contributed by R249. Residue E272 participates in NADPH binding.

Belongs to the NAD-dependent glycerol-3-phosphate dehydrogenase family.

The protein resides in the cytoplasm. It catalyses the reaction sn-glycerol 3-phosphate + NAD(+) = dihydroxyacetone phosphate + NADH + H(+). The catalysed reaction is sn-glycerol 3-phosphate + NADP(+) = dihydroxyacetone phosphate + NADPH + H(+). In terms of biological role, catalyzes the reduction of the glycolytic intermediate dihydroxyacetone phosphate (DHAP) to sn-glycerol 3-phosphate (G3P). This is Glycerol-3-phosphate dehydrogenase [NAD(P)+] from Methanothermobacter thermautotrophicus (strain ATCC 29096 / DSM 1053 / JCM 10044 / NBRC 100330 / Delta H) (Methanobacterium thermoautotrophicum).